The primary structure comprises 511 residues: Cytochrome P450 77A2 (511 aa).

C456 lines the heme pocket.

This sequence belongs to the cytochrome P450 family. Heme serves as cofactor.

This Solanum melongena (Eggplant) protein is Cytochrome P450 77A2 (CYP77A2).